The chain runs to 115 residues: Ribonuclease P protein component (115 aa).

The protein belongs to the RnpA family. Consists of a catalytic RNA component (M1 or rnpB) and a protein subunit.

It carries out the reaction Endonucleolytic cleavage of RNA, removing 5'-extranucleotides from tRNA precursor.. Functionally, RNaseP catalyzes the removal of the 5'-leader sequence from pre-tRNA to produce the mature 5'-terminus. It can also cleave other RNA substrates such as 4.5S RNA. The protein component plays an auxiliary but essential role in vivo by binding to the 5'-leader sequence and broadening the substrate specificity of the ribozyme. This chain is Ribonuclease P protein component, found in Bacillus cereus (strain AH187).